Consider the following 310-residue polypeptide: Porphobilinogen deaminase (310 aa).

The residue at position 243 (C243) is an S-(dipyrrolylmethanemethyl)cysteine.

It belongs to the HMBS family. Monomer. Requires dipyrromethane as cofactor.

It catalyses the reaction 4 porphobilinogen + H2O = hydroxymethylbilane + 4 NH4(+). It functions in the pathway porphyrin-containing compound metabolism; protoporphyrin-IX biosynthesis; coproporphyrinogen-III from 5-aminolevulinate: step 2/4. Tetrapolymerization of the monopyrrole PBG into the hydroxymethylbilane pre-uroporphyrinogen in several discrete steps. The chain is Porphobilinogen deaminase from Mannheimia succiniciproducens (strain KCTC 0769BP / MBEL55E).